A 191-amino-acid chain; its full sequence is Probable DNA-directed RNA polymerase subunit delta (191 aa).

Residues 14-83 (LSMIEVARAI…GENKWGLRSW (70 aa)) form the HTH HARE-type domain. Composition is skewed to acidic residues over residues 117–136 (GDED…DFTE) and 142–191 (EYDE…EEEV). A disordered region spans residues 117-191 (GDEDAIDYND…DEEEEEEEEV (75 aa)).

The protein belongs to the RpoE family. RNAP is composed of a core of 2 alpha, a beta and a beta' subunits. The core is associated with a delta subunit and one of several sigma factors.

Functionally, participates in both the initiation and recycling phases of transcription. In the presence of the delta subunit, RNAP displays an increased specificity of transcription, a decreased affinity for nucleic acids, and an increased efficiency of RNA synthesis because of enhanced recycling. The protein is Probable DNA-directed RNA polymerase subunit delta of Streptococcus agalactiae serotype Ia (strain ATCC 27591 / A909 / CDC SS700).